The chain runs to 151 residues: Flagellar assembly factor FliW (151 aa).

The protein belongs to the FliW family. Interacts with translational regulator CsrA and flagellin(s).

It is found in the cytoplasm. Its function is as follows. Acts as an anti-CsrA protein, binds CsrA and prevents it from repressing translation of its target genes, one of which is flagellin. Binds to flagellin and participates in the assembly of the flagellum. The chain is Flagellar assembly factor FliW from Lachnospira eligens (strain ATCC 27750 / DSM 3376 / VPI C15-48 / C15-B4) (Eubacterium eligens).